The following is an 83-amino-acid chain: Small ribosomal subunit protein bS16 (83 aa).

The protein belongs to the bacterial ribosomal protein bS16 family.

In Borrelia turicatae (strain 91E135), this protein is Small ribosomal subunit protein bS16.